The primary structure comprises 400 residues: NADH-ubiquinone oxidoreductase 49 kDa subunit (400 aa).

Belongs to the complex I 49 kDa subunit family.

The protein localises to the mitochondrion. It carries out the reaction a ubiquinone + NADH + 5 H(+)(in) = a ubiquinol + NAD(+) + 4 H(+)(out). Core subunit of the mitochondrial membrane respiratory chain NADH dehydrogenase (Complex I) that is believed to belong to the minimal assembly required for catalysis. Complex I functions in the transfer of electrons from NADH to the respiratory chain. The immediate electron acceptor for the enzyme is believed to be ubiquinone. Component of the iron-sulfur (IP) fragment of the enzyme. Component of the iron-sulfur (IP) fragment of the enzyme. The polypeptide is NADH-ubiquinone oxidoreductase 49 kDa subunit (NAD7) (Paramecium tetraurelia).